The sequence spans 452 residues: Probable cytosolic iron-sulfur protein assembly protein 1 (452 aa).

Residues 1–12 (MPPPTTPTPNPS) are compositionally biased toward pro residues. Positions 1–24 (MPPPTTPTPNPSIPQKATLTPLPP) are disordered. WD repeat units lie at residues 70–121 (GHAR…DAAA), 161–200 (GHEN…QGGD), 213–267 (EHDG…EWVC), 273–319 (GHGG…FGGV), 340–379 (VHTR…EDVA), and 411–452 (YEVN…VRIS).

This sequence belongs to the WD repeat CIA1 family.

Essential component of the cytosolic iron-sulfur (Fe/S) protein assembly machinery. Required for the maturation of extramitochondrial Fe/S proteins. The protein is Probable cytosolic iron-sulfur protein assembly protein 1 of Chaetomium globosum (strain ATCC 6205 / CBS 148.51 / DSM 1962 / NBRC 6347 / NRRL 1970) (Soil fungus).